The sequence spans 885 residues: Initiator protein NS1 (885 aa).

Residues 404-477 (AEAGPSGTQP…GREDIFSGAP (74 aa)) form a disordered region. Positions 409-423 (SGTQPVETAQQSPPT) are enriched in polar residues. Gly residues predominate over residues 452 to 465 (QAAGGSEMGAGGSA).

It belongs to the parvoviruses initiator protein NS1 family. Homooligomer. Mg(2+) serves as cofactor.

The protein resides in the host nucleus. The catalysed reaction is ATP + H2O = ADP + phosphate + H(+). In terms of biological role, multifunctional protein which displays endonuclease and helicase activities required for initiating and directing viral DNA replication. Also plays a role in viral packaging and transactivation of several promoters. Binds site-specifically to 2-3 approximate tandem copies within the origins of replication (Ori), unwinds this hairpin region and nicks one DNA strand thereby initiating the rolling circle replication (RCR). The sequence is that of Initiator protein NS1 from Bombyx mori densovirus (BmDNV).